Here is a 321-residue protein sequence, read N- to C-terminus: Probable arabinan endo-1,5-alpha-L-arabinosidase C (321 aa).

A signal peptide spans 1–18 (MYLYTLILLFLASANVNA). D33 (proton acceptor) is an active-site residue. N-linked (GlcNAc...) asparagine glycosylation occurs at N192. E200 serves as the catalytic Proton donor. N224 is a glycosylation site (N-linked (GlcNAc...) asparagine).

This sequence belongs to the glycosyl hydrolase 43 family.

The protein localises to the secreted. It catalyses the reaction Endohydrolysis of (1-&gt;5)-alpha-arabinofuranosidic linkages in (1-&gt;5)-arabinans.. The protein operates within glycan metabolism; L-arabinan degradation. Its function is as follows. Endo-1,5-alpha-L-arabinanase involved in degradation of pectin. Its preferred substrate is linear 1,5-alpha-L-arabinan. The protein is Probable arabinan endo-1,5-alpha-L-arabinosidase C (abnC) of Aspergillus fumigatus (strain CBS 144.89 / FGSC A1163 / CEA10) (Neosartorya fumigata).